A 327-amino-acid chain; its full sequence is DNA-directed RNA polymerase subunit alpha (327 aa).

The segment at 1 to 233 (MVREKVKVST…NLFIPFLHVE (233 aa)) is alpha N-terminal domain (alpha-NTD). The interval 265-327 (KELAFQYIFI…KKILDILEKK (63 aa)) is alpha C-terminal domain (alpha-CTD).

It belongs to the RNA polymerase alpha chain family. In plastids the minimal PEP RNA polymerase catalytic core is composed of four subunits: alpha, beta, beta', and beta''. When a (nuclear-encoded) sigma factor is associated with the core the holoenzyme is formed, which can initiate transcription.

It localises to the plastid. Its subcellular location is the chloroplast. It catalyses the reaction RNA(n) + a ribonucleoside 5'-triphosphate = RNA(n+1) + diphosphate. In terms of biological role, DNA-dependent RNA polymerase catalyzes the transcription of DNA into RNA using the four ribonucleoside triphosphates as substrates. This is DNA-directed RNA polymerase subunit alpha from Olimarabidopsis pumila (Dwarf rocket).